The sequence spans 43 residues: Protein PsbN (43 aa).

The helical transmembrane segment at 7–27 threads the bilayer; that stretch reads VAIFISCLLVSFTGYALYTAF.

Belongs to the PsbN family.

It localises to the plastid. The protein localises to the chloroplast thylakoid membrane. May play a role in photosystem I and II biogenesis. In Zygnema circumcarinatum (Green alga), this protein is Protein PsbN.